A 458-amino-acid polypeptide reads, in one-letter code: Cysteine--tRNA ligase (458 aa).

Residue cysteine 29 coordinates Zn(2+). Positions 31–41 (MTVYDLCHLGH) match the 'HIGH' region motif. Cysteine 213, histidine 238, and glutamate 242 together coordinate Zn(2+). A 'KMSKS' region motif is present at residues 270 to 274 (KMSKS). Lysine 273 is an ATP binding site.

It belongs to the class-I aminoacyl-tRNA synthetase family. As to quaternary structure, monomer. The cofactor is Zn(2+).

Its subcellular location is the cytoplasm. It carries out the reaction tRNA(Cys) + L-cysteine + ATP = L-cysteinyl-tRNA(Cys) + AMP + diphosphate. This Acidovorax ebreus (strain TPSY) (Diaphorobacter sp. (strain TPSY)) protein is Cysteine--tRNA ligase.